The primary structure comprises 149 residues: uncharacterized protein (149 aa).

Positions 130–144 (ESNVTKENIEIKEEK) are enriched in basic and acidic residues. The disordered stretch occupies residues 130–149 (ESNVTKENIEIKEEKEENSE).

This is an uncharacterized protein from Methanocaldococcus jannaschii (strain ATCC 43067 / DSM 2661 / JAL-1 / JCM 10045 / NBRC 100440) (Methanococcus jannaschii).